The primary structure comprises 485 residues: Cholesterol 16,22-dihydroxylase CYP90G4 (485 aa).

A helical membrane pass occupies residues 4-24 (VVILFFLFPTLLVLVVAVLGL). Cys432 is a heme binding site.

The protein belongs to the cytochrome P450 family. As to expression, mainly expressed in leaves and, at low levels, in roots and stems.

Its subcellular location is the membrane. It catalyses the reaction cholesterol + 2 reduced [NADPH--hemoprotein reductase] + 2 O2 = (16S,22S)-dihydroxycholesterol + 2 oxidized [NADPH--hemoprotein reductase] + 2 H2O + 2 H(+). Its pathway is steroid metabolism; cholesterol metabolism. Its function is as follows. Involved in the biosynthesis of spiroketal steroid and saponin natural products from cholesterol such as diosgenin and analogs (e.g. furostanol and spirostanol), plant defense compounds used as main precursors for the industrial production of steroid hormones. During the 5,6-spiroketalization of cholesterol, catalyzes the hydroxylation of cholesterol to form 16S,22S-dihydroxycholesterol and, possibly, the subsequent conversion of 16S,22S-dihydroxycholesterol into 16-oxo-22-hydroxy-cholesterol and 16-hydroxy-22-oxo-cholesterol. 16-hydroxy-22-oxo-cholesterol submit a spontaneous reaction leading to the production of furostanol-type steroid diastereomers, precursors of diosgenin. The sequence is that of Cholesterol 16,22-dihydroxylase CYP90G4 from Paris polyphylla (Daiswa polyphylla).